Reading from the N-terminus, the 297-residue chain is Acetylglutamate kinase (297 aa).

Residues 70 to 71 (GG), Arg92, and Asn194 each bind substrate.

This sequence belongs to the acetylglutamate kinase family. ArgB subfamily.

It is found in the cytoplasm. The enzyme catalyses N-acetyl-L-glutamate + ATP = N-acetyl-L-glutamyl 5-phosphate + ADP. Its pathway is amino-acid biosynthesis; L-arginine biosynthesis; N(2)-acetyl-L-ornithine from L-glutamate: step 2/4. Its function is as follows. Catalyzes the ATP-dependent phosphorylation of N-acetyl-L-glutamate. The chain is Acetylglutamate kinase from Janthinobacterium sp. (strain Marseille) (Minibacterium massiliensis).